The primary structure comprises 119 residues: MDILCSTLLLLTVPSWVLSQVTLKESGPALVKPTQTLTLTCTFSGFSLSTSGMRVSWIRQPPGKALEWLARIDWDDDKFYSTSLKTRLTISKDTSKNQVVLTMTNMDPVDTATYYCARI.

The signal sequence occupies residues 1–19 (MDILCSTLLLLTVPSWVLS). At Gln-20 the chain carries Pyrrolidone carboxylic acid. The framework-1 stretch occupies residues 20–44 (QVTLKESGPALVKPTQTLTLTCTFS). The region spanning 20–119 (QVTLKESGPA…DTATYYCARI (100 aa)) is the Ig-like domain. A disulfide bridge connects residues Cys-41 and Cys-116. The complementarity-determining-1 stretch occupies residues 45 to 54 (GFSLSTSGMR). Residues 55 to 71 (VSWIRQPPGKALEWLAR) form a framework-2 region. The interval 72–78 (IDWDDDK) is complementarity-determining-2. Positions 79–116 (FYSTSLKTRLTISKDTSKNQVVLTMTNMDPVDTATYYC) are framework-3. The interval 117-119 (ARI) is complementarity-determining-3.

Immunoglobulins are composed of two identical heavy chains and two identical light chains; disulfide-linked.

The protein localises to the secreted. It localises to the cell membrane. V region of the variable domain of immunoglobulin heavy chains that participates in the antigen recognition. Immunoglobulins, also known as antibodies, are membrane-bound or secreted glycoproteins produced by B lymphocytes. In the recognition phase of humoral immunity, the membrane-bound immunoglobulins serve as receptors which, upon binding of a specific antigen, trigger the clonal expansion and differentiation of B lymphocytes into immunoglobulins-secreting plasma cells. Secreted immunoglobulins mediate the effector phase of humoral immunity, which results in the elimination of bound antigens. The antigen binding site is formed by the variable domain of one heavy chain, together with that of its associated light chain. Thus, each immunoglobulin has two antigen binding sites with remarkable affinity for a particular antigen. The variable domains are assembled by a process called V-(D)-J rearrangement and can then be subjected to somatic hypermutations which, after exposure to antigen and selection, allow affinity maturation for a particular antigen. The polypeptide is Immunoglobulin heavy variable 2-70D (Homo sapiens (Human)).